The following is a 317-amino-acid chain: Olfactory receptor 2F1 (317 aa).

Over 1-24 (MGTDNQTWVSEFILLGLSSDWDTR) the chain is Extracellular. Asparagine 5 carries N-linked (GlcNAc...) asparagine glycosylation. The chain crosses the membrane as a helical span at residues 25-48 (VSLFVLFLVMYVVTVLGNCLIVLL). Residues 49–57 (IRLDSRLHT) are Cytoplasmic-facing. The helical transmembrane segment at 58-79 (PMYFFLTNLSLVDVSYATSVVP) threads the bilayer. Residues 80-100 (QLLAHFLAEHKAIPFQSCAAQ) are Extracellular-facing. Cysteines 97 and 189 form a disulfide. Residues 101–120 (LFFSLALGGIEFVLLAVMAY) form a helical membrane-spanning segment. Residues 121 to 139 (DRYVAVCDALRYSAIMHGG) lie on the Cytoplasmic side of the membrane. A helical membrane pass occupies residues 140–160 (LCARLAITSWVSGFISSPVQT). The Extracellular portion of the chain corresponds to 161 to 200 (AITFQLPMCRNKFIDHISCELLAVVRLACVDTSSNEVTIM). The helical transmembrane segment at 201–222 (VSSIVLLMTPFCLVLLSYIQII) threads the bilayer. At 223–236 (STILKIQSREGRKK) the chain is on the cytoplasmic side. Residues 237–261 (AFHTCASHLTVVALCYGVAIFTYIQ) traverse the membrane as a helical segment. At 262-272 (PHSSPSVLQEK) the chain is on the extracellular side. Residues 273–292 (LFSVFYAILTPMLNPMIYSL) form a helical membrane-spanning segment. Over 293–317 (RNKEVKGAWQKLLWKFSGLTSKLAT) the chain is Cytoplasmic.

It belongs to the G-protein coupled receptor 1 family.

It is found in the cell membrane. Functionally, odorant receptor. The chain is Olfactory receptor 2F1 (OR2F1) from Homo sapiens (Human).